Here is a 394-residue protein sequence, read N- to C-terminus: Small RNA 2'-O-methyltransferase (394 aa).

S-adenosyl-L-methionine is bound by residues Asp78 and Ser114. Glu132, Glu135, His136, and His181 together coordinate Mg(2+).

This sequence belongs to the methyltransferase superfamily. HEN1 family. Requires Mg(2+) as cofactor.

The protein localises to the cytoplasm. The catalysed reaction is small RNA 3'-end nucleotide + S-adenosyl-L-methionine = small RNA 3'-end 2'-O-methylnucleotide + S-adenosyl-L-homocysteine + H(+). Methyltransferase that adds a 2'-O-methyl group at the 3'-end of piRNAs, a class of 24 to 30 nucleotide RNAs that are generated by a Dicer-independent mechanism and are primarily derived from transposons and other repeated sequence elements. This probably protects the 3'-end of piRNAs from uridylation activity and subsequent degradation. Stabilization of piRNAs is essential for gametogenesis. The sequence is that of Small RNA 2'-O-methyltransferase (Henmt1) from Rattus norvegicus (Rat).